Reading from the N-terminus, the 118-residue chain is Large ribosomal subunit protein uL18 (118 aa).

This sequence belongs to the universal ribosomal protein uL18 family. As to quaternary structure, part of the 50S ribosomal subunit; part of the 5S rRNA/L5/L18/L25 subcomplex. Contacts the 5S and 23S rRNAs.

This is one of the proteins that bind and probably mediate the attachment of the 5S RNA into the large ribosomal subunit, where it forms part of the central protuberance. The polypeptide is Large ribosomal subunit protein uL18 (Rickettsia conorii (strain ATCC VR-613 / Malish 7)).